Consider the following 243-residue polypeptide: Thiamin pyrophosphokinase 1 (243 aa).

It belongs to the thiamine pyrophosphokinase family.

It carries out the reaction thiamine + ATP = thiamine diphosphate + AMP + H(+). The protein operates within cofactor biosynthesis; thiamine diphosphate biosynthesis; thiamine diphosphate from thiamine: step 1/1. Its function is as follows. Catalyzes the phosphorylation of thiamine to thiamine pyrophosphate. Functions cell non-autonomously. The chain is Thiamin pyrophosphokinase 1 from Caenorhabditis elegans.